The following is a 203-amino-acid chain: MTKYHFTSKDFNVFNVEGLEPRMVALIETTRPKLEALGEYFSSYLSQHTDETFYPHVAKHLRRKTNPPNDTWVAFSTNKRGYKMLPHFQIGLFDDHAFVLFGIIYESPEKERMAAKWQQQVNDILALDRDFIIKSDHMKKTYETVHSLDEDALKRYIDRLINVKKGELLFGKVFFPDDAALMSDKKFLAAVEDTFFKLLPLYI.

Belongs to the UPF0637 family.

In Macrococcus caseolyticus (strain JCSC5402) (Macrococcoides caseolyticum), this protein is UPF0637 protein MCCL_0722.